We begin with the raw amino-acid sequence, 394 residues long: Phosphopentomutase (394 aa).

Positions 15, 288, 293, 329, 330, and 341 each coordinate Mn(2+).

It belongs to the phosphopentomutase family. It depends on Mn(2+) as a cofactor.

Its subcellular location is the cytoplasm. It carries out the reaction 2-deoxy-alpha-D-ribose 1-phosphate = 2-deoxy-D-ribose 5-phosphate. It catalyses the reaction alpha-D-ribose 1-phosphate = D-ribose 5-phosphate. It functions in the pathway carbohydrate degradation; 2-deoxy-D-ribose 1-phosphate degradation; D-glyceraldehyde 3-phosphate and acetaldehyde from 2-deoxy-alpha-D-ribose 1-phosphate: step 1/2. Isomerase that catalyzes the conversion of deoxy-ribose 1-phosphate (dRib-1-P) and ribose 1-phosphate (Rib-1-P) to deoxy-ribose 5-phosphate (dRib-5-P) and ribose 5-phosphate (Rib-5-P), respectively. The chain is Phosphopentomutase from Bacillus pumilus (strain SAFR-032).